The primary structure comprises 1034 residues: Mediator of RNA polymerase II transcription subunit 15 (1034 aa).

Low complexity-rich tracts occupy residues 101 to 123 (QRQQQQQQQQHHMQQQGSGQQQA), 138 to 149 (QQAQARQQAQRQ), 157 to 183 (QQQQQPMPQQPQPQQQQPNMMRPQLTL), 281 to 312 (MNQVPQQQQQVRQQQQQQQQQQQQQHKQQPQH), 413 to 441 (QQIPQVQQAPLQQPQVQPPQSQQAQSRRQ), 459 to 490 (PQPQQTPQNIQQPMMQQQSSPPPQQQQQQQQQ), and 655 to 675 (QSQTQEPPQIAAQQQQPQQPI). Disordered stretches follow at residues 101 to 124 (QRQQQQQQQQHHMQQQGSGQQQAN), 138 to 183 (QQAQ…QLTL), 281 to 315 (MNQVPQQQQQVRQQQQQQQQQQQQQHKQQPQHQEP), 413 to 497 (QQIP…SVPR), 655 to 682 (QSQTQEPPQIAAQQQQPQQPISGVNNNS), 712 to 804 (SAIS…NPYK), and 951 to 1020 (ISPT…ESTD). 2 stretches are compositionally biased toward polar residues: residues 738–764 (NSQSGIPTSNPQSNSNASVVNSRTATP) and 772–802 (PMFNNKSLASGQQNSPSPKTMINSPPQQDNP). Residues 962–971 (SESKKVKFDS) show a composition bias toward basic and acidic residues. The segment covering 998–1020 (SINSKPSIPSSAGNMPAPNESTD) has biased composition (polar residues).

This sequence belongs to the Mediator complex subunit 15 family. Component of the Mediator complex.

It localises to the nucleus. Component of the Mediator complex, a coactivator involved in the regulated transcription of nearly all RNA polymerase II-dependent genes. Mediator functions as a bridge to convey information from gene-specific regulatory proteins to the basal RNA polymerase II transcription machinery. Mediator is recruited to promoters by direct interactions with regulatory proteins and serves as a scaffold for the assembly of a functional preinitiation complex with RNA polymerase II and the general transcription factors. Required for transcription of genes encoding galactose-metabolizing enzymes. Essential for normal growth on nonfermentable carbon sources, for sporulation and mating. The polypeptide is Mediator of RNA polymerase II transcription subunit 15 (GAL11) (Kluyveromyces lactis (strain ATCC 8585 / CBS 2359 / DSM 70799 / NBRC 1267 / NRRL Y-1140 / WM37) (Yeast)).